A 420-amino-acid polypeptide reads, in one-letter code: WD repeat-containing protein jip5 (420 aa).

6 WD repeats span residues 9–48 (PLSADLFSQALHPKEPVVSVGLSSGHVQTFRLPSDEVDSD), 72–111 (RHKGSCRCLGFGVDGEMLYSAGTDGLVKAAKAETGVVENK), 117–158 (DKNG…SKVS), 221–262 (VSSV…DQDE), 271–314 (GGGE…VVSE), and 318–355 (DETEGVVGLGFDVEGRMVSGGGQIVKVWHEAVDSGDGV). Residues 39–63 (RLPSDEVDSDDDGASTSSSRTGRGH) form a disordered region. The interval 350–420 (DSGDGVNGNE…QAVMAFHDLD (71 aa)) is disordered. A compositionally biased stretch (acidic residues) spans 368–387 (DDSDEDSDDGDDDDDSGDSD). Positions 394–406 (DARKKRKKGKTPK) are enriched in basic residues.

This sequence belongs to the WD repeat WDR55 family.

Its subcellular location is the nucleus. The protein resides in the nucleolus. The polypeptide is WD repeat-containing protein jip5 (jip5) (Aspergillus terreus (strain NIH 2624 / FGSC A1156)).